Here is a 180-residue protein sequence, read N- to C-terminus: CASP-like protein 5A1 (180 aa).

Topologically, residues 1–36 (MEVSHPAVHPVAVPPVLTEPPARVRMKDYQGMPGTL) are cytoplasmic. A helical transmembrane segment spans residues 37–57 (GGLALRLGQLGFAVLSFSIMV). Residues 58–67 (STPDFSQVTA) lie on the Extracellular side of the membrane. Residues 68–88 (FCYLVAATVLQTLWSSITAVV) traverse the membrane as a helical segment. Residues 89–102 (DIYALSVRRSLHHS) lie on the Cytoplasmic side of the membrane. A helical transmembrane segment spans residues 103–123 (LLVGLFAVGDGVTSTLTFAAA). At 124–150 (CATAGITVLIDNDLDECGQNHCGRFEA) the chain is on the extracellular side. A helical membrane pass occupies residues 151 to 171 (AAAMAFLSWIMAAPSFLLAFW). Over 172 to 180 (SFGNKIVCF) the chain is Cytoplasmic.

Belongs to the Casparian strip membrane proteins (CASP) family. As to quaternary structure, homodimer and heterodimers.

It localises to the cell membrane. This chain is CASP-like protein 5A1, found in Pteridium aquilinum subsp. aquilinum (Bracken fern).